We begin with the raw amino-acid sequence, 372 residues long: Alanine racemase (372 aa).

The active-site Proton acceptor; specific for D-alanine is the Lys-33. At Lys-33 the chain carries N6-(pyridoxal phosphate)lysine. Arg-131 provides a ligand contact to substrate. Tyr-261 (proton acceptor; specific for L-alanine) is an active-site residue. Substrate is bound at residue Met-309.

The protein belongs to the alanine racemase family. The cofactor is pyridoxal 5'-phosphate.

The catalysed reaction is L-alanine = D-alanine. It functions in the pathway amino-acid biosynthesis; D-alanine biosynthesis; D-alanine from L-alanine: step 1/1. Functionally, catalyzes the interconversion of L-alanine and D-alanine. May also act on other amino acids. The protein is Alanine racemase (alr) of Salinispora arenicola (strain CNS-205).